A 189-amino-acid chain; its full sequence is MASYSTNEFKGGLKVLIDGNPMVIVENEFVKPGKGQAFNRVKLKNLLNDRVVEKTFKSGESVEAADVEELTTVYSYFDGDSYVFMHPETFEQYMVSEEALGETKKWLKDQDEYQVILFNGQPISIIAPNFVNLEIIETDPGLKGDTAGTGGKPATLSTGAVVRVPLFVQTGEIIKVDTRTSTYVSRVKD.

The residue at position 34 (lysine 34) is an N6-(3,6-diaminohexanoyl)-5-hydroxylysine.

This sequence belongs to the elongation factor P family. May be beta-lysylated on the epsilon-amino group of Lys-34 by the combined action of EpmA and EpmB, and then hydroxylated on the C5 position of the same residue by EpmC (if this protein is present). Lysylation is critical for the stimulatory effect of EF-P on peptide-bond formation. The lysylation moiety may extend toward the peptidyltransferase center and stabilize the terminal 3-CCA end of the tRNA. Hydroxylation of the C5 position on Lys-34 may allow additional potential stabilizing hydrogen-bond interactions with the P-tRNA.

The protein resides in the cytoplasm. It participates in protein biosynthesis; polypeptide chain elongation. Involved in peptide bond synthesis. Alleviates ribosome stalling that occurs when 3 or more consecutive Pro residues or the sequence PPG is present in a protein, possibly by augmenting the peptidyl transferase activity of the ribosome. Modification of Lys-34 is required for alleviation. The sequence is that of Elongation factor P from Francisella tularensis subsp. novicida (strain U112).